A 185-amino-acid chain; its full sequence is Small ribosomal subunit protein uS5 (185 aa).

One can recognise an S5 DRBM domain in the interval 18–81 (FVDKLVHINR…ESAKRALIRV (64 aa)).

The protein belongs to the universal ribosomal protein uS5 family. As to quaternary structure, part of the 30S ribosomal subunit. Contacts proteins S4 and S8.

In terms of biological role, with S4 and S12 plays an important role in translational accuracy. Its function is as follows. Located at the back of the 30S subunit body where it stabilizes the conformation of the head with respect to the body. The sequence is that of Small ribosomal subunit protein uS5 from Azorhizobium caulinodans (strain ATCC 43989 / DSM 5975 / JCM 20966 / LMG 6465 / NBRC 14845 / NCIMB 13405 / ORS 571).